We begin with the raw amino-acid sequence, 637 residues long: GTP-binding protein 4 (637 aa).

Ala2 is subject to N-acetylalanine. At Lys103 the chain carries N6-acetyllysine; alternate. Residue Lys103 forms a Glycyl lysine isopeptide (Lys-Gly) (interchain with G-Cter in SUMO2); alternate linkage. Ser122 is modified (phosphoserine). Residues 169–340 (RTLLLCGYPN…VKTEACDRLL (172 aa)) form the OBG-type G domain. Residues 175 to 182 (GYPNVGKS), 221 to 225 (DTPGI), and 289 to 292 (SKCE) each bind GTP. A Glycyl lysine isopeptide (Lys-Gly) (interchain with G-Cter in SUMO2) cross-link involves residue Lys332. Disordered stretches follow at residues 499 to 518 (SKEK…KVQR) and 525 to 637 (MRSL…KERR). Lys535 participates in a covalent cross-link: Glycyl lysine isopeptide (Lys-Gly) (interchain with G-Cter in SUMO2). The segment covering 542-555 (VRARRSRSVTRKRK) has biased composition (basic residues). Ser559 carries the post-translational modification Phosphoserine. Positions 563-574 (SSIARSRSRSCS) are enriched in low complexity. A compositionally biased stretch (basic and acidic residues) spans 576 to 588 (TPRDVSGLRDVKM). Residues 589-607 (VKKAKTMMKKAQKKMNRLG) are compositionally biased toward basic residues. Basic and acidic residues predominate over residues 608–621 (KKGEADRHVFDMKP). The segment covering 622–637 (KHLLSGKRKAGKKERR) has biased composition (basic residues).

It belongs to the TRAFAC class OBG-HflX-like GTPase superfamily. OBG GTPase family. NOG subfamily. In terms of assembly, associates with pre-60S ribosomal particles. Interacts with MINAS-60 (product of an alternative open reading frame of RBM10).

It localises to the nucleus. Its subcellular location is the nucleolus. In terms of biological role, involved in the biogenesis of the 60S ribosomal subunit. Acts as TP53 repressor, preventing TP53 stabilization and cell cycle arrest. This is GTP-binding protein 4 (Gtpbp4) from Rattus norvegicus (Rat).